Consider the following 101-residue polypeptide: NADH-quinone oxidoreductase subunit K (101 aa).

3 helical membrane passes run 5–25 (PNWYLALSAVLFTIGTFGVLF), 30–50 (IVVLMSVELMLNAVNLTLVTF), and 62–82 (LVFFSIAVAAAEAAVGLAIVI).

This sequence belongs to the complex I subunit 4L family. In terms of assembly, NDH-1 is composed of 14 different subunits. Subunits NuoA, H, J, K, L, M, N constitute the membrane sector of the complex.

The protein resides in the cell inner membrane. The enzyme catalyses a quinone + NADH + 5 H(+)(in) = a quinol + NAD(+) + 4 H(+)(out). Its function is as follows. NDH-1 shuttles electrons from NADH, via FMN and iron-sulfur (Fe-S) centers, to quinones in the respiratory chain. The immediate electron acceptor for the enzyme in this species is believed to be a menaquinone. Couples the redox reaction to proton translocation (for every two electrons transferred, four hydrogen ions are translocated across the cytoplasmic membrane), and thus conserves the redox energy in a proton gradient. This Salinibacter ruber (strain DSM 13855 / M31) protein is NADH-quinone oxidoreductase subunit K.